Consider the following 266-residue polypeptide: 15-hydroxyprostaglandin dehydrogenase [NAD(+)] (266 aa).

Residues 12 to 20 (GAAQGIGRA), 36 to 37 (DW), 63 to 65 (CDV), and Asn91 contribute to the NAD(+) site. The substrate site is built by Ser138 and Gln148. The active-site Proton acceptor is Tyr151. Residues 151–155 (YCASK) and 186–188 (VNT) contribute to the NAD(+) site.

It belongs to the short-chain dehydrogenases/reductases (SDR) family. As to quaternary structure, homodimer.

Its subcellular location is the cytoplasm. The enzyme catalyses prostaglandin E2 + NAD(+) = 15-oxoprostaglandin E2 + NADH + H(+). The catalysed reaction is (15S)-hydroxy-(5Z,8Z,11Z,13E)-eicosatetraenoate + NAD(+) = 15-oxo-(5Z,8Z,11Z,13E)-eicosatetraenoate + NADH + H(+). It carries out the reaction (11R)-hydroxy-(5Z,8Z,12E,14Z)-eicosatetraenoate + NAD(+) = 11-oxo-(5Z,8Z,12E,14Z)-eicosatetraenoate + NADH + H(+). It catalyses the reaction lipoxin A4 + NAD(+) = 15-oxo-(5S,6R)-dihydroxy-(7E,9E,11Z,13E)-eicosatetraenoate + NADH + H(+). The enzyme catalyses 15-oxo-(5S,6R)-dihydroxy-(7E,9E,11Z)-eicosatrienoate + NADH + H(+) = (5S,6R,15S)-trihydroxy-(7E,9E,11Z)-eicosatrienoate + NAD(+). The catalysed reaction is prostaglandin A1 + NAD(+) = 15-oxo-prostaglandin A1 + NADH + H(+). It carries out the reaction prostaglandin E1 + NAD(+) = 15-oxoprostaglandin E1 + NADH + H(+). It catalyses the reaction 14-hydroxy-(4Z,7Z,10Z,12E,16Z,19Z)-docosahexaenoate + NAD(+) = 14-oxo-(4Z,7Z,10Z,12E,16Z,19Z)-docosahexaenoate + NADH + H(+). The enzyme catalyses resolvin E1 + NAD(+) = 18-oxo-resolvin E1 + NADH + H(+). The catalysed reaction is resolvin D1 + NAD(+) = 8-oxoresolvin D1 + NADH + H(+). It carries out the reaction resolvin D1 + NAD(+) = 17-oxoresolvin D1 + NADH + H(+). It catalyses the reaction resolvin D2 + NAD(+) = 7-oxoresolvin D2 + NADH + H(+). The enzyme catalyses resolvin D2 + NAD(+) = 16-oxoresolvin D2 + NADH + H(+). Functionally, catalyzes the NAD-dependent dehydrogenation (oxidation) of a broad array of hydroxylated polyunsaturated fatty acids (mainly eicosanoids and docosanoids, including prostaglandins, lipoxins and resolvins), yielding their corresponding keto (oxo) metabolites. Decreases the levels of the pro-proliferative prostaglandins such as prostaglandin E2 (whose activity is increased in cancer because of an increase in the expression of cyclooxygenase 2) and generates oxo-fatty acid products that can profoundly influence cell function by abrogating pro-inflammatory cytokine expression. Converts resolvins E1, D1 and D2 to their oxo products, which represents a mode of resolvin inactivation. Resolvin E1 plays important roles during the resolution phase of acute inflammation, while resolvins D1 and D2 have a unique role in obesity-induced adipose inflammation. The chain is 15-hydroxyprostaglandin dehydrogenase [NAD(+)] (HPGD) from Macaca fascicularis (Crab-eating macaque).